The sequence spans 211 residues: Thiamine-phosphate synthase (211 aa).

4-amino-2-methyl-5-(diphosphooxymethyl)pyrimidine is bound by residues Gln37–Lys41 and Asn69. Mg(2+) contacts are provided by Asp70 and Asp89. Residue Ser108 coordinates 4-amino-2-methyl-5-(diphosphooxymethyl)pyrimidine. Thr134–Thr136 serves as a coordination point for 2-[(2R,5Z)-2-carboxy-4-methylthiazol-5(2H)-ylidene]ethyl phosphate. Lys137 contacts 4-amino-2-methyl-5-(diphosphooxymethyl)pyrimidine. 2-[(2R,5Z)-2-carboxy-4-methylthiazol-5(2H)-ylidene]ethyl phosphate-binding positions include Gly166 and Val186–Ser187.

Belongs to the thiamine-phosphate synthase family. Mg(2+) is required as a cofactor.

It catalyses the reaction 2-[(2R,5Z)-2-carboxy-4-methylthiazol-5(2H)-ylidene]ethyl phosphate + 4-amino-2-methyl-5-(diphosphooxymethyl)pyrimidine + 2 H(+) = thiamine phosphate + CO2 + diphosphate. The enzyme catalyses 2-(2-carboxy-4-methylthiazol-5-yl)ethyl phosphate + 4-amino-2-methyl-5-(diphosphooxymethyl)pyrimidine + 2 H(+) = thiamine phosphate + CO2 + diphosphate. The catalysed reaction is 4-methyl-5-(2-phosphooxyethyl)-thiazole + 4-amino-2-methyl-5-(diphosphooxymethyl)pyrimidine + H(+) = thiamine phosphate + diphosphate. The protein operates within cofactor biosynthesis; thiamine diphosphate biosynthesis; thiamine phosphate from 4-amino-2-methyl-5-diphosphomethylpyrimidine and 4-methyl-5-(2-phosphoethyl)-thiazole: step 1/1. Its function is as follows. Condenses 4-methyl-5-(beta-hydroxyethyl)thiazole monophosphate (THZ-P) and 2-methyl-4-amino-5-hydroxymethyl pyrimidine pyrophosphate (HMP-PP) to form thiamine monophosphate (TMP). In Salmonella typhimurium (strain LT2 / SGSC1412 / ATCC 700720), this protein is Thiamine-phosphate synthase.